A 46-amino-acid polypeptide reads, in one-letter code: Esculentin-1GRa (46 aa).

As to expression, expressed by the skin glands.

It localises to the secreted. Antimicrobial peptide active against the Gram-positive bacterium S.aureus (MIC=12.5 uM) and against the Gram-negative bacterium E.coli (MIC=6 uM). Has no antifungal activity against C.albicans. Shows hemolytic activity against human erythrocytes only at high concentrations (LC(50)=210 uM). This is Esculentin-1GRa from Odorrana grahami (Yunnanfu frog).